Consider the following 491-residue polypeptide: (1S)-1-hydroxy-luvungin A synthase CYP88A37 (491 aa).

Residues 5–25 (FSWLILALAIFIGTYAFVFGV) traverse the membrane as a helical segment. A heme-binding site is contributed by Cys-439.

Belongs to the cytochrome P450 family. The cofactor is heme. In terms of tissue distribution, expressed in maturing fruits and in juice vesicles.

Its subcellular location is the membrane. It catalyses the reaction luvungin A + reduced [NADPH--hemoprotein reductase] + O2 = (1S)-1-hydroxy-luvungin A + oxidized [NADPH--hemoprotein reductase] + H2O + H(+). It functions in the pathway secondary metabolite biosynthesis; terpenoid biosynthesis. Its function is as follows. Monooxygenase involved in the biosynthesis of limonoids triterpene natural products such as limonin, a compound with insecticidal activity responsible for the bitter taste in citrus. Catalyzes the conversion of luvungin A to (1S)-1-hydroxy-luvungin A. In Citrus sinensis (Sweet orange), this protein is (1S)-1-hydroxy-luvungin A synthase CYP88A37.